We begin with the raw amino-acid sequence, 310 residues long: Porphobilinogen deaminase (310 aa).

Residue Cys-242 is modified to S-(dipyrrolylmethanemethyl)cysteine.

This sequence belongs to the HMBS family. As to quaternary structure, monomer. Dipyrromethane serves as cofactor.

It catalyses the reaction 4 porphobilinogen + H2O = hydroxymethylbilane + 4 NH4(+). Its pathway is porphyrin-containing compound metabolism; protoporphyrin-IX biosynthesis; coproporphyrinogen-III from 5-aminolevulinate: step 2/4. Functionally, tetrapolymerization of the monopyrrole PBG into the hydroxymethylbilane pre-uroporphyrinogen in several discrete steps. In Shewanella baltica (strain OS155 / ATCC BAA-1091), this protein is Porphobilinogen deaminase.